The following is a 472-amino-acid chain: Protein nucleotidyltransferase YdiU (472 aa).

Gly-86, Gly-88, Arg-89, Lys-109, Asp-121, Gly-122, Arg-172, and Arg-179 together coordinate ATP. Asp-244 (proton acceptor) is an active-site residue. Asn-245 and Asp-254 together coordinate Mg(2+). Asp-254 contacts ATP.

The protein belongs to the SELO family. It depends on Mg(2+) as a cofactor. Mn(2+) serves as cofactor.

The catalysed reaction is L-seryl-[protein] + ATP = 3-O-(5'-adenylyl)-L-seryl-[protein] + diphosphate. The enzyme catalyses L-threonyl-[protein] + ATP = 3-O-(5'-adenylyl)-L-threonyl-[protein] + diphosphate. It catalyses the reaction L-tyrosyl-[protein] + ATP = O-(5'-adenylyl)-L-tyrosyl-[protein] + diphosphate. It carries out the reaction L-histidyl-[protein] + UTP = N(tele)-(5'-uridylyl)-L-histidyl-[protein] + diphosphate. The catalysed reaction is L-seryl-[protein] + UTP = O-(5'-uridylyl)-L-seryl-[protein] + diphosphate. The enzyme catalyses L-tyrosyl-[protein] + UTP = O-(5'-uridylyl)-L-tyrosyl-[protein] + diphosphate. Its function is as follows. Nucleotidyltransferase involved in the post-translational modification of proteins. It can catalyze the addition of adenosine monophosphate (AMP) or uridine monophosphate (UMP) to a protein, resulting in modifications known as AMPylation and UMPylation. The chain is Protein nucleotidyltransferase YdiU from Ruegeria sp. (strain TM1040) (Silicibacter sp.).